The primary structure comprises 252 residues: Imidazole glycerol phosphate synthase subunit HisF (252 aa).

Residues Asp-11 and Asp-130 contribute to the active site.

It belongs to the HisA/HisF family. In terms of assembly, heterodimer of HisH and HisF.

It is found in the cytoplasm. It carries out the reaction 5-[(5-phospho-1-deoxy-D-ribulos-1-ylimino)methylamino]-1-(5-phospho-beta-D-ribosyl)imidazole-4-carboxamide + L-glutamine = D-erythro-1-(imidazol-4-yl)glycerol 3-phosphate + 5-amino-1-(5-phospho-beta-D-ribosyl)imidazole-4-carboxamide + L-glutamate + H(+). Its pathway is amino-acid biosynthesis; L-histidine biosynthesis; L-histidine from 5-phospho-alpha-D-ribose 1-diphosphate: step 5/9. IGPS catalyzes the conversion of PRFAR and glutamine to IGP, AICAR and glutamate. The HisF subunit catalyzes the cyclization activity that produces IGP and AICAR from PRFAR using the ammonia provided by the HisH subunit. The sequence is that of Imidazole glycerol phosphate synthase subunit HisF from Paramagnetospirillum magneticum (strain ATCC 700264 / AMB-1) (Magnetospirillum magneticum).